A 176-amino-acid chain; its full sequence is Ribosome maturation factor RimM (176 aa).

Positions Glu97–Phe176 constitute a PRC barrel domain.

The protein belongs to the RimM family. As to quaternary structure, binds ribosomal protein uS19.

It localises to the cytoplasm. Functionally, an accessory protein needed during the final step in the assembly of 30S ribosomal subunit, possibly for assembly of the head region. Essential for efficient processing of 16S rRNA. May be needed both before and after RbfA during the maturation of 16S rRNA. It has affinity for free ribosomal 30S subunits but not for 70S ribosomes. The polypeptide is Ribosome maturation factor RimM (Shewanella oneidensis (strain ATCC 700550 / JCM 31522 / CIP 106686 / LMG 19005 / NCIMB 14063 / MR-1)).